The primary structure comprises 94 residues: UPF0298 protein SEQ_1830 (94 aa).

It belongs to the UPF0298 family.

Its subcellular location is the cytoplasm. The protein is UPF0298 protein SEQ_1830 of Streptococcus equi subsp. equi (strain 4047).